The following is a 546-amino-acid chain: Glucose-6-phosphate isomerase (546 aa).

Residue E358 is the Proton donor of the active site. Catalysis depends on residues H389 and K504.

Belongs to the GPI family.

It is found in the cytoplasm. It catalyses the reaction alpha-D-glucose 6-phosphate = beta-D-fructose 6-phosphate. The protein operates within carbohydrate biosynthesis; gluconeogenesis. Its pathway is carbohydrate degradation; glycolysis; D-glyceraldehyde 3-phosphate and glycerone phosphate from D-glucose: step 2/4. Catalyzes the reversible isomerization of glucose-6-phosphate to fructose-6-phosphate. The chain is Glucose-6-phosphate isomerase from Desulfosudis oleivorans (strain DSM 6200 / JCM 39069 / Hxd3) (Desulfococcus oleovorans).